A 90-amino-acid chain; its full sequence is DNA-binding protein HU-beta (90 aa).

It belongs to the bacterial histone-like protein family. Heterodimer of an alpha and a beta chain.

Functionally, histone-like DNA-binding protein which is capable of wrapping DNA to stabilize it, and thus to prevent its denaturation under extreme environmental conditions. The chain is DNA-binding protein HU-beta (hupB) from Salmonella typhi.